The chain runs to 97 residues: Large ribosomal subunit protein uL23 (97 aa).

Belongs to the universal ribosomal protein uL23 family. In terms of assembly, part of the 50S ribosomal subunit. Contacts protein L29, and trigger factor when it is bound to the ribosome.

Functionally, one of the early assembly proteins it binds 23S rRNA. One of the proteins that surrounds the polypeptide exit tunnel on the outside of the ribosome. Forms the main docking site for trigger factor binding to the ribosome. The protein is Large ribosomal subunit protein uL23 of Brucella anthropi (strain ATCC 49188 / DSM 6882 / CCUG 24695 / JCM 21032 / LMG 3331 / NBRC 15819 / NCTC 12168 / Alc 37) (Ochrobactrum anthropi).